A 267-amino-acid polypeptide reads, in one-letter code: Putative hydro-lyase RALTA_B1245 (267 aa).

This sequence belongs to the D-glutamate cyclase family.

The protein is Putative hydro-lyase RALTA_B1245 of Cupriavidus taiwanensis (strain DSM 17343 / BCRC 17206 / CCUG 44338 / CIP 107171 / LMG 19424 / R1) (Ralstonia taiwanensis (strain LMG 19424)).